The following is a 229-amino-acid chain: MQNAFTIDQLPLSWQEQLENEWSQPYMHKLREFLQTEYSRTTVYPAKDNIFTALKSTPFDAVRVVVLGQDPYPGEGQAHGLSFSVPHGVRLPPSLMNIFRELQTDLGIKNTTGCLQPWADQGVLLLNTVLTVRAGAPFSHAGQGWERFTDAIVTKLIENRSHVIFVLWGNAARKKCDLLFRSTHKHAILAAAHPSPLAAHRGFFGCSHFSKINYLLKKLERPMINWKLP.

Asp-70 acts as the Proton acceptor in catalysis.

The protein belongs to the uracil-DNA glycosylase (UDG) superfamily. UNG family.

It localises to the cytoplasm. It catalyses the reaction Hydrolyzes single-stranded DNA or mismatched double-stranded DNA and polynucleotides, releasing free uracil.. In terms of biological role, excises uracil residues from the DNA which can arise as a result of misincorporation of dUMP residues by DNA polymerase or due to deamination of cytosine. This Chlamydia felis (strain Fe/C-56) (Chlamydophila felis) protein is Uracil-DNA glycosylase.